Here is a 192-residue protein sequence, read N- to C-terminus: GTP cyclohydrolase-2 (192 aa).

R50–E54 serves as a coordination point for GTP. Zn(2+) contacts are provided by C55, C66, and C68. GTP is bound by residues E92–R94 and T114. D126 serves as the catalytic Proton acceptor. R128 (nucleophile) is an active-site residue. Residues T149 and K154 each contribute to the GTP site.

This sequence belongs to the GTP cyclohydrolase II family. Zn(2+) serves as cofactor.

The enzyme catalyses GTP + 4 H2O = 2,5-diamino-6-hydroxy-4-(5-phosphoribosylamino)-pyrimidine + formate + 2 phosphate + 3 H(+). The protein operates within cofactor biosynthesis; riboflavin biosynthesis; 5-amino-6-(D-ribitylamino)uracil from GTP: step 1/4. In terms of biological role, catalyzes the conversion of GTP to 2,5-diamino-6-ribosylamino-4(3H)-pyrimidinone 5'-phosphate (DARP), formate and pyrophosphate. In Helicobacter pylori (strain P12), this protein is GTP cyclohydrolase-2.